The sequence spans 318 residues: Myeloid-associated differentiation marker (318 aa).

MARVEL domains lie at 25–157 (ALTQ…ARPG) and 162–315 (YMAT…RLVF). 8 helical membrane-spanning segments follow: residues 35–55 (LLQLVSTCVAFSLVASVGAWT), 58–78 (MGNWAMFTWCFCFAVTLIILI), 95–115 (FPITFACYAALFCLSSSIIYP), 131–151 (AIAATTFSCVACLAYATEVAW), 165–185 (TVPGLLKVFETFVACIIFAFI), 197–217 (LEWCVAVYAICFILAAVTVLL), 233–253 (FLSGLALLSVLLYATAIVLWP), and 290–310 (LAVSILTGINLLAYVSDLVYS).

It belongs to the MAL family.

The protein resides in the membrane. This is Myeloid-associated differentiation marker (Myadm) from Rattus norvegicus (Rat).